A 507-amino-acid polypeptide reads, in one-letter code: ATP synthase subunit alpha, chloroplastic (507 aa).

ATP is bound at residue 170–177 (GDRQTGKT). The residue at position 383 (Ser-383) is a Phosphoserine.

This sequence belongs to the ATPase alpha/beta chains family. In terms of assembly, F-type ATPases have 2 components, CF(1) - the catalytic core - and CF(0) - the membrane proton channel. CF(1) has five subunits: alpha(3), beta(3), gamma(1), delta(1), epsilon(1). CF(0) has four main subunits: a, b, b' and c. In terms of processing, only phosphorylated in mesophyll cells, and only when cells are grown under high rather than low light regimes (70 vs 900 umol photons/m-2/s).

The protein resides in the plastid. The protein localises to the chloroplast thylakoid membrane. The enzyme catalyses ATP + H2O + 4 H(+)(in) = ADP + phosphate + 5 H(+)(out). Functionally, produces ATP from ADP in the presence of a proton gradient across the membrane. The alpha chain is a regulatory subunit. This chain is ATP synthase subunit alpha, chloroplastic, found in Zea mays (Maize).